The primary structure comprises 338 residues: Large ribosomal subunit protein uL10 (338 aa).

The tract at residues 297–338 (PSAQQTQTQQSTAEEKKEEKKEEEKKGPSEEEIGSGLASLFG) is disordered. Positions 298–308 (SAQQTQTQQST) are enriched in low complexity. The span at 309-325 (AEEKKEEKKEEEKKGPS) shows a compositional bias: basic and acidic residues.

The protein belongs to the universal ribosomal protein uL10 family. In terms of assembly, part of the 50S ribosomal subunit. Forms part of the ribosomal stalk which helps the ribosome interact with GTP-bound translation factors. Forms a heptameric L10(L12)2(L12)2(L12)2 complex, where L10 forms an elongated spine to which the L12 dimers bind in a sequential fashion.

Functionally, forms part of the ribosomal stalk, playing a central role in the interaction of the ribosome with GTP-bound translation factors. The sequence is that of Large ribosomal subunit protein uL10 from Saccharolobus islandicus (strain M.14.25 / Kamchatka #1) (Sulfolobus islandicus).